Here is a 394-residue protein sequence, read N- to C-terminus: MRDFAKEIEQRKQAGLYRTRRLIAGPQQPTLTADGRSLLSFCSNDYLGLASHGENMRALEQALPEVGLGGAASHLVCGHHEAHHRLEQRLAAFTRRSSALFFSTGYMANMGVISALAGRGDTIFSDRLNHASIIDGCILSRARVRRYAHGDVAALETMLSETSGHKLVVTDGVFSMDGDIAPLTELARVCKAHDALLVVDDAHGVGVLGPQGRGSVLEAGLCQEDVPVLIGTLGKGVGTSGAFVAGSDVLIDYLVQKARTYIYTTAMPPALAAATCASLDAVESGDERRAHLDALIQRFRAGAQDLGYELMSSRTPIQPIMIGDNWTALALSRALEDEGLLVTAIRPPTVPEGEARLRVTLSAAHTEADVDRLLRALAKSRSVLSEAVAREPAL.

Residue Arg18 participates in substrate binding. 105-106 contributes to the pyridoxal 5'-phosphate binding site; the sequence is GY. His130 is a substrate binding site. Positions 175, 203, and 232 each coordinate pyridoxal 5'-phosphate. Lys235 bears the N6-(pyridoxal phosphate)lysine mark. Thr349 is a substrate binding site.

This sequence belongs to the class-II pyridoxal-phosphate-dependent aminotransferase family. BioF subfamily. Homodimer. Requires pyridoxal 5'-phosphate as cofactor.

It carries out the reaction 6-carboxyhexanoyl-[ACP] + L-alanine + H(+) = (8S)-8-amino-7-oxononanoate + holo-[ACP] + CO2. Its pathway is cofactor biosynthesis; biotin biosynthesis. Catalyzes the decarboxylative condensation of pimeloyl-[acyl-carrier protein] and L-alanine to produce 8-amino-7-oxononanoate (AON), [acyl-carrier protein], and carbon dioxide. The protein is 8-amino-7-oxononanoate synthase of Marinobacter nauticus (strain ATCC 700491 / DSM 11845 / VT8) (Marinobacter aquaeolei).